Here is a 317-residue protein sequence, read N- to C-terminus: Tumor-associated calcium signal transducer 2 (317 aa).

An N-terminal signal peptide occupies residues 1-24 (MARGLDLAPLLLLLLAMVAGFCTA). Residues 25 to 270 (QINCTCPTNK…QFSMKRLTTG (246 aa)) are Extracellular-facing. A glycan (N-linked (GlcNAc...) asparagine) is linked at asparagine 27. Positions 64–139 (TSKCLLLKAR…TDKGDQSLRC (76 aa)) constitute a Thyroglobulin type-1 domain. Intrachain disulfides connect cysteine 67–cysteine 102, cysteine 113–cysteine 119, and cysteine 121–cysteine 139. N-linked (GlcNAc...) asparagine glycosylation occurs at asparagine 114. N-linked (GlcNAc...) asparagine glycosylation is found at asparagine 162 and asparagine 202. A helical transmembrane segment spans residues 271–291 (LIAVIAVVAVALVAGVVVLVV). At 292 to 317 (TNRRKSGKYKKVELKELGEMRSEPSL) the chain is on the cytoplasmic side.

This sequence belongs to the EPCAM family.

The protein localises to the membrane. Functionally, may function as a growth factor receptor. The protein is Tumor-associated calcium signal transducer 2 (Tacstd2) of Rattus norvegicus (Rat).